The sequence spans 695 residues: Translation initiation factor IF-2 (695 aa).

Positions 60–92 (KKSASSKKKTEKEVEEEEIETPKKKKKQEEKIP) are disordered. The region spanning 184 to 358 (QRPPVVTVMG…EMSEIKCIPT (175 aa)) is the tr-type G domain. The tract at residues 193-200 (GHVDHGKT) is G1. 193–200 (GHVDHGKT) is a binding site for GTP. A G2 region spans residues 218–222 (GITQS). A G3 region spans residues 239–242 (DTPG). Residues 239–243 (DTPGH) and 293–296 (NKID) contribute to the GTP site. The G4 stretch occupies residues 293 to 296 (NKID). The tract at residues 330-332 (SAK) is G5.

This sequence belongs to the TRAFAC class translation factor GTPase superfamily. Classic translation factor GTPase family. IF-2 subfamily.

The protein resides in the cytoplasm. In terms of biological role, one of the essential components for the initiation of protein synthesis. Protects formylmethionyl-tRNA from spontaneous hydrolysis and promotes its binding to the 30S ribosomal subunits. Also involved in the hydrolysis of GTP during the formation of the 70S ribosomal complex. In Kosmotoga olearia (strain ATCC BAA-1733 / DSM 21960 / TBF 19.5.1), this protein is Translation initiation factor IF-2.